The chain runs to 469 residues: MNPNQKIITIGSVSLTIATICFLMQIAILVTTVTLHFKQYECDSPANNQVMPCEPIIIERNITEIVYLTNTTIEKEICPKLVEYRNWSKPQCKITGFAPFSKDNSIRLSAGGDIWVTREPYVSCDPGKCYQFALGQGTTLDNKHSNDTIHDRTPHRTLLMNELGVPFHLGTRQVCIAWSSSSCHDGKAWLHVCVTGYDKNATASFIYDGRLVDSIGSWSQNILRTQESECVCINGTCTVVMTDGSASGRADTKILFIEEGKIVHISPLSGSAQHVEECSCYPRYPGVRCICRDNWKGSNRPVVDINVKDYSIDSSYVCSGLVGDTPRNNDRSSNSYCRNPNNEKGNHGVKGWAFDDGNDVWMGRTISEDSRSGYETFKVIGGWSTPNSKLQINRQVIVDSDNRSGYSGIFSVEGKSCINRCFYVELIRGREQETRVWWTSNSIVVFCGTSGTYGTGSWPDGADINLMPI.

Residues 1–9 (MNPNQKIIT) are Intravirion-facing. A helical membrane pass occupies residues 10 to 30 (IGSVSLTIATICFLMQIAILV). Residues 11–33 (GSVSLTIATICFLMQIAILVTTV) are involved in apical transport and lipid raft association. Over 31–469 (TTVTLHFKQY…DGADINLMPI (439 aa)) the chain is Virion surface. The hypervariable stalk region stretch occupies residues 36–88 (HFKQYECDSPANNQVMPCEPIIIERNITEIVYLTNTTIEKEICPKLVEYRNWS). 3 N-linked (GlcNAc...) asparagine; by host glycosylation sites follow: N61, N70, and N86. The interval 91–469 (QCKITGFAPF…DGADINLMPI (379 aa)) is head of neuraminidase. 8 disulfides stabilise this stretch: C92–C417, C124–C129, C183–C230, C232–C237, C278–C291, C280–C289, C318–C337, and C421–C447. Residue R118 participates in substrate binding. Residue N146 is glycosylated (N-linked (GlcNAc...) asparagine; by host). The Proton donor/acceptor role is filled by D151. Substrate is bound at residue R152. 2 N-linked (GlcNAc...) asparagine; by host glycosylation sites follow: N200 and N234. Residue 276–277 (EE) coordinates substrate. R292 contributes to the substrate binding site. Ca(2+)-binding residues include D293, G297, and D324. R371 is a binding site for substrate. A glycan (N-linked (GlcNAc...) asparagine; by host) is linked at N402. Y406 acts as the Nucleophile in catalysis.

This sequence belongs to the glycosyl hydrolase 34 family. As to quaternary structure, homotetramer. Ca(2+) is required as a cofactor. N-glycosylated.

The protein localises to the virion membrane. The protein resides in the host apical cell membrane. The catalysed reaction is Hydrolysis of alpha-(2-&gt;3)-, alpha-(2-&gt;6)-, alpha-(2-&gt;8)- glycosidic linkages of terminal sialic acid residues in oligosaccharides, glycoproteins, glycolipids, colominic acid and synthetic substrates.. Its activity is regulated as follows. Inhibited by the neuraminidase inhibitors zanamivir (Relenza) and oseltamivir (Tamiflu). These drugs interfere with the release of progeny virus from infected cells and are effective against all influenza strains. Resistance to neuraminidase inhibitors is quite rare. Catalyzes the removal of terminal sialic acid residues from viral and cellular glycoconjugates. Cleaves off the terminal sialic acids on the glycosylated HA during virus budding to facilitate virus release. Additionally helps virus spread through the circulation by further removing sialic acids from the cell surface. These cleavages prevent self-aggregation and ensure the efficient spread of the progeny virus from cell to cell. Otherwise, infection would be limited to one round of replication. Described as a receptor-destroying enzyme because it cleaves a terminal sialic acid from the cellular receptors. May facilitate viral invasion of the upper airways by cleaving the sialic acid moieties on the mucin of the airway epithelial cells. Likely to plays a role in the budding process through its association with lipid rafts during intracellular transport. May additionally display a raft-association independent effect on budding. Plays a role in the determination of host range restriction on replication and virulence. Sialidase activity in late endosome/lysosome traffic seems to enhance virus replication. The polypeptide is Neuraminidase (Influenza A virus (strain A/Udorn/307/1972 H3N2)).